The sequence spans 325 residues: ATP synthase gamma chain (325 aa).

This sequence belongs to the ATPase gamma chain family. As to quaternary structure, F-type ATPases have 2 components, CF(1) - the catalytic core - and CF(0) - the membrane proton channel. CF(1) has five subunits: alpha(3), beta(3), gamma(1), delta(1), epsilon(1). CF(0) has three main subunits: a, b and c.

The protein localises to the cell membrane. Functionally, produces ATP from ADP in the presence of a proton gradient across the membrane. The gamma chain is believed to be important in regulating ATPase activity and the flow of protons through the CF(0) complex. In Corynebacterium glutamicum (strain R), this protein is ATP synthase gamma chain.